The sequence spans 330 residues: tRNA-modifying protein YgfZ (330 aa).

Positions 28 and 190 each coordinate folate.

It belongs to the tRNA-modifying YgfZ family.

The protein resides in the cytoplasm. Its function is as follows. Folate-binding protein involved in regulating the level of ATP-DnaA and in the modification of some tRNAs. It is probably a key factor in regulatory networks that act via tRNA modification, such as initiation of chromosomal replication. This chain is tRNA-modifying protein YgfZ, found in Serratia proteamaculans (strain 568).